The chain runs to 240 residues: Ribosomal RNA small subunit methyltransferase J (240 aa).

S-adenosyl-L-methionine contacts are provided by residues 93 to 94 (RD) and aspartate 162.

It belongs to the methyltransferase superfamily. RsmJ family.

It is found in the cytoplasm. It carries out the reaction guanosine(1516) in 16S rRNA + S-adenosyl-L-methionine = N(2)-methylguanosine(1516) in 16S rRNA + S-adenosyl-L-homocysteine + H(+). Its function is as follows. Specifically methylates the guanosine in position 1516 of 16S rRNA. This is Ribosomal RNA small subunit methyltransferase J from Francisella philomiragia subsp. philomiragia (strain ATCC 25017 / CCUG 19701 / FSC 153 / O#319-036).